The primary structure comprises 853 residues: Aryl hydrocarbon receptor (853 aa).

The propeptide occupies 1–9; it reads MSSGANITY. A disordered region spans residues 1–38; that stretch reads MSSGANITYASRKRRKPVQKTVKPVPAEGIKSNPSKRH. 2 consecutive short sequence motifs (nuclear localization signal) follow at residues 12 to 15 and 36 to 41; these read RKRR and KRHRDR. One can recognise a bHLH domain in the interval 26–79; that stretch reads PAEGIKSNPSKRHRDRLNTELDRLASLLPFPQDVINKLDKLSVLRLSVSYLRAK. The segment at 37 to 65 is DNA-binding; the sequence is RHRDRLNTELDRLASLLPFPQDVINKLDK. Required for maintaining the overall integrity of the AHR:ARNT heterodimer and its transcriptional activity regions lie at residues 49 to 81, 116 to 124, and 264 to 266; these read LASL…AKSF, LLQALNGFV, and FAI. The Nuclear export signal signature appears at 63-71; it reads LDKLSVLRL. The PAS 1 domain maps to 116–179; that stretch reads LLQALNGFVL…RQLHWALNPS (64 aa). The 68-residue stretch at 273 to 340 folds into the PAS 2 domain; it reads PSILEIRTKN…CAESHIRMIK (68 aa). A PAC domain is found at 346 to 384; the sequence is MTVFRLLAKHSRWRWVQSNARLIYRNGRPDYIIATQRPL. Residues 429–451 form a disordered region; that stretch reads TKSNTSRKDWAPQSTPSKDSFHP. Residues 440 to 451 are compositionally biased toward polar residues; that stretch reads PQSTPSKDSFHP.

In terms of assembly, homodimer. Heterodimer; efficient DNA binding requires dimerization with another bHLH protein. Interacts with ARNT; the heterodimer ARNT:AHR binds to core DNA sequence 5'-TGCGTG-3' within the dioxin response element (DRE) of target gene promoters and activates their transcription. Binds MYBBP1A. Interacts with coactivators including SRC-1, RIP140 and NOCA7, and with the corepressor SMRT. Interacts with NEDD8 and IVNS1ABP. Interacts with BMAL1. Interacts with HSP90AB1. Interacts with TIPARP; leading to mono-ADP-ribosylation of AHR and subsequent inhibition of AHR. In terms of processing, mono-ADP-ribosylated, leading to inhibit transcription activator activity of AHR. In terms of tissue distribution, expressed in all tissues tested including brain, heart, kidney, liver, lung, spleen, skeletal muscle and thymus.

The protein localises to the cytoplasm. It localises to the nucleus. In terms of biological role, ligand-activated transcription factor that enables cells to adapt to changing conditions by sensing compounds from the environment, diet, microbiome and cellular metabolism, and which plays important roles in development, immunity and cancer. Upon ligand binding, translocates into the nucleus, where it heterodimerizes with ARNT and induces transcription by binding to xenobiotic response elements (XRE). Regulates a variety of biological processes, including angiogenesis, hematopoiesis, drug and lipid metabolism, cell motility and immune modulation. Xenobiotics can act as ligands: upon xenobiotic-binding, activates the expression of multiple phase I and II xenobiotic chemical metabolizing enzyme genes (such as the CYP1A1 gene). Mediates biochemical and toxic effects of halogenated aromatic hydrocarbons. Next to xenobiotics, natural ligands derived from plants, microbiota, and endogenous metabolism are potent AHR agonists. Tryptophan (Trp) derivatives constitute an important class of endogenous AHR ligands. Acts as a negative regulator of anti-tumor immunity: indoles and kynurenic acid generated by Trp catabolism act as ligand and activate AHR, thereby promoting AHR-driven cancer cell motility and suppressing adaptive immunity. Regulates the circadian clock by inhibiting the basal and circadian expression of the core circadian component PER1. Inhibits PER1 by repressing the CLOCK-BMAL1 heterodimer mediated transcriptional activation of PER1. The heterodimer ARNT:AHR binds to core DNA sequence 5'-TGCGTG-3' within the dioxin response element (DRE) of target gene promoters and activates their transcription. This is Aryl hydrocarbon receptor (Ahr) from Rattus norvegicus (Rat).